Consider the following 60-residue polypeptide: Sec-independent protein translocase protein TatA (60 aa).

Residues methionine 1–glycine 21 form a helical membrane-spanning segment.

It belongs to the TatA/E family. Forms a complex with TatC.

Its subcellular location is the cell membrane. In terms of biological role, part of the twin-arginine translocation (Tat) system that transports large folded proteins containing a characteristic twin-arginine motif in their signal peptide across membranes. TatA could form the protein-conducting channel of the Tat system. This chain is Sec-independent protein translocase protein TatA, found in Herpetosiphon aurantiacus (strain ATCC 23779 / DSM 785 / 114-95).